A 239-amino-acid polypeptide reads, in one-letter code: 4-hydroxy-tetrahydrodipicolinate reductase (239 aa).

Residues 8–13 (GSTGKM), 78–80 (GTT), and 102–105 (SANM) contribute to the NAD(+) site. H134 serves as the catalytic Proton donor/acceptor. H135 lines the (S)-2,3,4,5-tetrahydrodipicolinate pocket. K138 (proton donor) is an active-site residue. 144–145 (GT) contributes to the (S)-2,3,4,5-tetrahydrodipicolinate binding site.

This sequence belongs to the DapB family.

The protein localises to the cytoplasm. It catalyses the reaction (S)-2,3,4,5-tetrahydrodipicolinate + NAD(+) + H2O = (2S,4S)-4-hydroxy-2,3,4,5-tetrahydrodipicolinate + NADH + H(+). The enzyme catalyses (S)-2,3,4,5-tetrahydrodipicolinate + NADP(+) + H2O = (2S,4S)-4-hydroxy-2,3,4,5-tetrahydrodipicolinate + NADPH + H(+). It participates in amino-acid biosynthesis; L-lysine biosynthesis via DAP pathway; (S)-tetrahydrodipicolinate from L-aspartate: step 4/4. Functionally, catalyzes the conversion of 4-hydroxy-tetrahydrodipicolinate (HTPA) to tetrahydrodipicolinate. The chain is 4-hydroxy-tetrahydrodipicolinate reductase from Rickettsia conorii (strain ATCC VR-613 / Malish 7).